A 444-amino-acid polypeptide reads, in one-letter code: Tubulin beta-2 chain (444 aa).

The GTP site is built by Gln-11, Glu-69, Ser-138, Gly-142, Thr-143, Gly-144, Asn-204, and Asn-226. Position 69 (Glu-69) interacts with Mg(2+).

The protein belongs to the tubulin family. As to quaternary structure, dimer of alpha and beta chains. A typical microtubule is a hollow water-filled tube with an outer diameter of 25 nm and an inner diameter of 15 nM. Alpha-beta heterodimers associate head-to-tail to form protofilaments running lengthwise along the microtubule wall with the beta-tubulin subunit facing the microtubule plus end conferring a structural polarity. Microtubules usually have 13 protofilaments but different protofilament numbers can be found in some organisms and specialized cells. It depends on Mg(2+) as a cofactor.

Its subcellular location is the cytoplasm. It localises to the cytoskeleton. Functionally, tubulin is the major constituent of microtubules, a cylinder consisting of laterally associated linear protofilaments composed of alpha- and beta-tubulin heterodimers. Microtubules grow by the addition of GTP-tubulin dimers to the microtubule end, where a stabilizing cap forms. Below the cap, tubulin dimers are in GDP-bound state, owing to GTPase activity of alpha-tubulin. The protein is Tubulin beta-2 chain (TUBB2) of Zea mays (Maize).